A 123-amino-acid chain; its full sequence is SOSS complex subunit C homolog (123 aa).

Belongs to the SOSS-C family.

The protein is SOSS complex subunit C homolog of Drosophila ananassae (Fruit fly).